The following is a 688-amino-acid chain: Eukaryotic translation initiation factor 3 subunit B (688 aa).

Positions 1–28 (MAKKKGDQYDSDGAEDQDYDEEPVFEDP) are disordered. A compositionally biased stretch (acidic residues) spans 9–25 (YDSDGAEDQDYDEEPVF). The 85-residue stretch at 57–141 (NVIVVDNIPV…HTLLVNLFSD (85 aa)) folds into the RRM domain. 6 WD repeats span residues 208 to 246 (RERF…KINK), 247 to 287 (FAHS…EKRS), 291 to 329 (DGSS…LLDK), 332 to 367 (IKVQ…TLLE), 440 to 482 (EVKE…EPTM), and 527 to 572 (GDHY…KRVN). Positions 612–643 (DRVRMTRASKELLEKRAKLREQFVEYRAKRVN) form a coiled coil.

It belongs to the eIF-3 subunit B family. As to quaternary structure, component of the eukaryotic translation initiation factor 3 (eIF-3) complex.

The protein localises to the cytoplasm. Functionally, RNA-binding component of the eukaryotic translation initiation factor 3 (eIF-3) complex, which is involved in protein synthesis of a specialized repertoire of mRNAs and, together with other initiation factors, stimulates binding of mRNA and methionyl-tRNAi to the 40S ribosome. The eIF-3 complex specifically targets and initiates translation of a subset of mRNAs involved in cell proliferation. The chain is Eukaryotic translation initiation factor 3 subunit B from Culex quinquefasciatus (Southern house mosquito).